We begin with the raw amino-acid sequence, 182 residues long: Glycerol-3-phosphate acyltransferase 1 (182 aa).

A run of 5 helical transmembrane segments spans residues 5–25 (MQFLYLVASYLFGNILTAYIV), 54–74 (GYFIVTFLGDAIKGAIVVSIA), 81–101 (STFVMLALLAVLLGHIYPIVF), 117–137 (IAFDYLIALTLVAVFIIFYLI), and 157–177 (ILYSYSIVTTILSALIIVLIL).

The protein belongs to the PlsY family. As to quaternary structure, probably interacts with PlsX.

Its subcellular location is the cell membrane. It carries out the reaction an acyl phosphate + sn-glycerol 3-phosphate = a 1-acyl-sn-glycero-3-phosphate + phosphate. Its pathway is lipid metabolism; phospholipid metabolism. Functionally, catalyzes the transfer of an acyl group from acyl-phosphate (acyl-PO(4)) to glycerol-3-phosphate (G3P) to form lysophosphatidic acid (LPA). This enzyme utilizes acyl-phosphate as fatty acyl donor, but not acyl-CoA or acyl-ACP. This Bacillus cereus (strain ATCC 10987 / NRS 248) protein is Glycerol-3-phosphate acyltransferase 1.